Consider the following 198-residue polypeptide: COMM domain-containing protein 9 (198 aa).

Ala2 bears the N-acetylalanine mark. The 75-residue stretch at 122–196 folds into the COMM domain; that stretch reads RLVDLDWRVD…RIRDQLSAVA (75 aa).

The protein belongs to the COMM domain-containing protein 9 family. Component of the commander complex consisting of the CCC subcomplex and the retriever subcomplex. Component of the CCC (COMMD/CCDC22/CCDC93) subcomplex consisting of COMMD1, COMMD2, COMMD3, COMMD4, COMMD5, COMMD6, COMMD7, COMMD8, COMMD9, COMMD10, CCDC22 and CCDC93; within the complex forms a heterodimer with COMMD7. Interacts with RELB and NFKB1/p105. Interacts with CCDC22, CCDC93, SCNN1B, CUL1. Ubiquitous.

The protein localises to the nucleus. Its subcellular location is the cytoplasmic vesicle. Scaffold protein in the commander complex that is essential for endosomal recycling of transmembrane cargos; the commander complex is composed of the CCC subcomplex and the retriever subcomplex. May modulate activity of cullin-RING E3 ubiquitin ligase (CRL) complexes. May down-regulate activation of NF-kappa-B. Modulates Na(+) transport in epithelial cells by regulation of apical cell surface expression of amiloride-sensitive sodium channel (ENaC) subunits. The polypeptide is COMM domain-containing protein 9 (COMMD9) (Homo sapiens (Human)).